The sequence spans 1322 residues: Centrosome-associated protein Alms1a (1322 aa).

9 disordered regions span residues 1 to 26, 53 to 135, 165 to 193, 252 to 442, 464 to 614, 657 to 752, 814 to 844, 856 to 911, and 1083 to 1109; these read MRAK…ESSR, TASS…SEVT, SQSA…SVLK, EEPS…NSVY, KHNQ…GSRP, ESST…ASTD, SKSQ…KERP, AEAE…LNQR, and ASAT…SSMM. Low complexity predominate over residues 53–62; the sequence is TASSGASGST. Residues 78-111 show a composition bias toward basic and acidic residues; the sequence is MEHESRPESGHRRRTKSSDHRSPDERGEAKEQLR. A compositionally biased stretch (polar residues) spans 165–189; the sequence is SQSAEDIRTPTKSPQMQNKKTQTPE. Positions 279-292 are enriched in low complexity; that stretch reads SLNSGMESSLSSNK. The segment covering 309–318 has biased composition (polar residues); sequence EVSSCQTDCR. Low complexity predominate over residues 319-330; that stretch reads SSSQKESTQGSS. The segment covering 338 to 350 has biased composition (polar residues); it reads NFTTEGTQCSYNR. Positions 354–364 are enriched in acidic residues; that stretch reads EIDSIMEEEES. 2 stretches are compositionally biased toward basic and acidic residues: residues 365 to 375 and 394 to 408; these read IDRRKKDDLRI and SRRE…DDSR. Over residues 409–430 the composition is skewed to low complexity; it reads LNSPNSSRLGSEVSSRVESSRS. Composition is skewed to basic and acidic residues over residues 464 to 487, 495 to 512, and 519 to 538; these read KHNQ…EQHQ, PKGR…REQQ, and RDQR…EREQ. 2 stretches are compositionally biased toward low complexity: residues 594 to 605 and 657 to 669; these read STGVTASTSTTS and ESST…SSSS. Polar residues predominate over residues 678–696; it reads GSLQQVAATNTNQSNARSS. Over residues 714-735 the composition is skewed to low complexity; the sequence is AIGSSSPLPESVSYSGSTSGSG. Polar residues-rich tracts occupy residues 737 to 751 and 822 to 832; these read VITQ…NAST and TESATAAQIPS. The segment covering 893 to 907 has biased composition (pro residues); it reads LPAPPPTQPPPPPPH. Residues 1092-1107 are compositionally biased toward low complexity; it reads SAITRSTTTTTNSSSS. Residues 1115 to 1322 form an interaction with Klp10A region; it reads MSVPMGMMNT…ISLNHSMAIM (208 aa). The tract at residues 1190–1309 is ALMS motif; the sequence is SLQDQLQLAR…FNKRLKSRVA (120 aa).

It belongs to the ALMS1 family. Interacts (via C-terminus) with Klp10A. Interacts with SAK. Expressed in all germlines, including germline stem cells and spermatogonia.

The protein resides in the cytoplasm. The protein localises to the cytoskeleton. It localises to the microtubule organizing center. It is found in the centrosome. Its subcellular location is the centriole. Its function is as follows. In asymmetrically dividing germline stem cells (GSCs), plays a critical role in ensuring centrosome duplication, which is essential for the production of centrosomes and centrioles in all downstream germ cells. Might recruit SAK for daughter centriole duplication. This is Centrosome-associated protein Alms1a from Drosophila melanogaster (Fruit fly).